The sequence spans 765 residues: 5-methyltetrahydropteroyltriglutamate--homocysteine methyltransferase 1 (765 aa).

Lys-18 and Asn-116 together coordinate 5-methyltetrahydropteroyltri-L-glutamate. L-homocysteine is bound at residue 437–439; it reads IGS. Residues 437-439 and Glu-490 contribute to the L-methionine site; that span reads IGS. Residues 521–522 and Trp-567 each bind 5-methyltetrahydropteroyltri-L-glutamate; that span reads RC. Residue Asp-605 participates in L-homocysteine binding. L-methionine is bound at residue Asp-605. Residues His-647, Cys-649, His-658, Asp-662, and Glu-671 each coordinate Zn(2+). Residue His-701 is the Proton donor of the active site. Position 733 (Cys-733) interacts with Zn(2+).

It belongs to the vitamin-B12 independent methionine synthase family. Zn(2+) serves as cofactor. As to expression, expressed in leaves, stems, flowers, siliques and seeds.

The protein localises to the cytoplasm. It is found in the cytosol. The catalysed reaction is 5-methyltetrahydropteroyltri-L-glutamate + L-homocysteine = tetrahydropteroyltri-L-glutamate + L-methionine. The protein operates within amino-acid biosynthesis; L-methionine biosynthesis via de novo pathway; L-methionine from L-homocysteine (MetE route): step 1/1. Functionally, catalyzes the transfer of a methyl group from 5-methyltetrahydrofolate to homocysteine resulting in methionine formation. The chain is 5-methyltetrahydropteroyltriglutamate--homocysteine methyltransferase 1 (MS1) from Arabidopsis thaliana (Mouse-ear cress).